Here is a 129-residue protein sequence, read N- to C-terminus: Large ribosomal subunit protein bL19 (129 aa).

Belongs to the bacterial ribosomal protein bL19 family.

Its function is as follows. This protein is located at the 30S-50S ribosomal subunit interface and may play a role in the structure and function of the aminoacyl-tRNA binding site. This is Large ribosomal subunit protein bL19 from Granulibacter bethesdensis (strain ATCC BAA-1260 / CGDNIH1).